Here is a 71-residue protein sequence, read N- to C-terminus: Small ribosomal subunit protein bS21 (71 aa).

The span at 48–59 (EKASLAKRHAKR) shows a compositional bias: basic residues. The segment at 48-71 (EKASLAKRHAKRNFRENARNTRLY) is disordered. Residues 60–71 (NFRENARNTRLY) show a composition bias toward basic and acidic residues.

The protein belongs to the bacterial ribosomal protein bS21 family.

This chain is Small ribosomal subunit protein bS21, found in Glaesserella parasuis serovar 5 (strain SH0165) (Haemophilus parasuis).